The following is a 461-amino-acid chain: Argininosuccinate lyase (461 aa).

This sequence belongs to the lyase 1 family. Argininosuccinate lyase subfamily.

The protein resides in the cytoplasm. It catalyses the reaction 2-(N(omega)-L-arginino)succinate = fumarate + L-arginine. It functions in the pathway amino-acid biosynthesis; L-arginine biosynthesis; L-arginine from L-ornithine and carbamoyl phosphate: step 3/3. In Nitrosomonas eutropha (strain DSM 101675 / C91 / Nm57), this protein is Argininosuccinate lyase.